The primary structure comprises 134 residues: ATP synthase epsilon chain, chloroplastic (134 aa).

Belongs to the ATPase epsilon chain family. As to quaternary structure, F-type ATPases have 2 components, CF(1) - the catalytic core - and CF(0) - the membrane proton channel. CF(1) has five subunits: alpha(3), beta(3), gamma(1), delta(1), epsilon(1). CF(0) has three main subunits: a, b and c.

It is found in the plastid. Its subcellular location is the chloroplast thylakoid membrane. Its function is as follows. Produces ATP from ADP in the presence of a proton gradient across the membrane. The protein is ATP synthase epsilon chain, chloroplastic of Liriodendron tulipifera (Tuliptree).